Here is a 122-residue protein sequence, read N- to C-terminus: Large ribosomal subunit protein uL14 (122 aa).

Belongs to the universal ribosomal protein uL14 family. In terms of assembly, part of the 50S ribosomal subunit. Forms a cluster with proteins L3 and L19. In the 70S ribosome, L14 and L19 interact and together make contacts with the 16S rRNA in bridges B5 and B8.

Binds to 23S rRNA. Forms part of two intersubunit bridges in the 70S ribosome. The chain is Large ribosomal subunit protein uL14 from Pseudomonas fluorescens (strain ATCC BAA-477 / NRRL B-23932 / Pf-5).